Consider the following 445-residue polypeptide: Argininosuccinate synthase (445 aa).

ATP contacts are provided by residues 17 to 25 (AFSGGLDTS) and A43. Y99 is a binding site for L-citrulline. Positions 129 and 131 each coordinate ATP. Residues T131, N135, and D136 each contribute to the L-aspartate site. L-citrulline is bound at residue N135. D136 provides a ligand contact to ATP. Residues R139 and S192 each contribute to the L-citrulline site. Residue D194 participates in ATP binding. L-citrulline-binding residues include T201, E203, and E280.

The protein belongs to the argininosuccinate synthase family. Type 2 subfamily. In terms of assembly, homotetramer.

It is found in the cytoplasm. The enzyme catalyses L-citrulline + L-aspartate + ATP = 2-(N(omega)-L-arginino)succinate + AMP + diphosphate + H(+). It functions in the pathway amino-acid biosynthesis; L-arginine biosynthesis; L-arginine from L-ornithine and carbamoyl phosphate: step 2/3. This chain is Argininosuccinate synthase, found in Burkholderia ambifaria (strain MC40-6).